Consider the following 738-residue polypeptide: Flowering time control protein FCA (738 aa).

The interval 1-118 (MHRGGDRSTD…RGDHSDHDNR (118 aa)) is disordered. 2 stretches are compositionally biased toward gly residues: residues 52-70 (RGGG…GGGR) and 81-98 (SGGG…GEPG). Basic and acidic residues predominate over residues 109–118 (RGDHSDHDNR). 2 RRM domains span residues 122 to 203 (VKLF…YADG) and 213 to 293 (HKLF…FADP). Disordered regions lie at residues 292 to 414 (DPKR…GHHL) and 566 to 594 (QQSN…AIIP). A compositionally biased stretch (gly residues) spans 301–311 (SRGGPAFGGPG). The span at 342–358 (HPSSPRSAPHQFNNFGS) shows a compositional bias: polar residues. A compositionally biased stretch (low complexity) spans 368–377 (TVTSTTDTAT). Polar residues-rich tracts occupy residues 383 to 401 (FSGN…SSHM) and 575 to 594 (PTQG…AIIP). In terms of domain architecture, WW spans 609–642 (VPLTCNWTEHTSPEGFKYYYNSITRESKWDKPEE). Positions 670-738 (MQQLQSPPQA…QSAQERAWKS (69 aa)) are disordered. Low complexity predominate over residues 683–706 (PAMQPVQQIPQAQQGQQQMQMKQQ). Polar residues predominate over residues 723–732 (RIQQGIQSAQ).

In terms of assembly, interacts with FY. Binds to SF1, FIK, RPRD1B, Os09g0509000/LOC_Os09g33480 and MADS8. As to expression, mostly expressed in young flowers (panicles) and stems, and also present in young seedlings leaves and roots.

Its subcellular location is the nucleus. Plays a major role in the promotion of the transition of the vegetative meristem to reproductive development. Required for RNA-mediated chromatin silencing of a range of loci in the genome. Cotranscriptionally recognizes aberrant RNA and marks it for silencing. Controls alternative cleavage and polyadenylation on pre-mRNAs and antisense RNAs. Regulates flowering time, seed size and cell volume, probably via the modulation of cell size. The protein is Flowering time control protein FCA of Oryza sativa subsp. japonica (Rice).